Reading from the N-terminus, the 346-residue chain is Uricase (346 aa).

Positions 1–23 are disordered; that stretch reads MFATPLRQPTNASGARPAVSMDG. Active-site charge relay system residues include Lys-39 and Thr-84. Urate is bound by residues Thr-84, Asp-85, Phe-208, Arg-225, Val-273, Gln-274, and Asn-300. His-302 serves as the catalytic Charge relay system. Positions 344-346 match the Microbody targeting signal motif; the sequence is SHL.

It belongs to the uricase family. Malpighian tubules.

It localises to the peroxisome. It carries out the reaction urate + O2 + H2O = 5-hydroxyisourate + H2O2. It functions in the pathway purine metabolism; urate degradation; (S)-allantoin from urate: step 1/3. Its activity is regulated as follows. Repressed by 20-hydroxyecdysone. Functionally, catalyzes the oxidation of uric acid to 5-hydroxyisourate, which is further processed to form (S)-allantoin. This is Uricase (Uro) from Drosophila pseudoobscura pseudoobscura (Fruit fly).